Consider the following 247-residue polypeptide: C-type lectin domain family 7 member A (247 aa).

Residues 1 to 44 (MEYHPDLENLDEDGYTQLHFDSRSNTRIAVVSEKGSCVASPPWR) are Cytoplasmic-facing. Positions 15 to 18 (YTQL) match the ITAM-like motif. The helical; Signal-anchor for type II membrane protein transmembrane segment at 45–65 (LIAVILGILCLVILVIAVVLG) threads the bilayer. The Extracellular segment spans residues 66-247 (TMAIWRPNSG…CSICEKKFSM (182 aa)). The segment at 81–105 (NGYFPSRNKENHSQPTQSPLEESVT) is disordered. Residue Asn-91 is glycosylated (N-linked (GlcNAc...) asparagine). Residues 93–105 (SQPTQSPLEESVT) are compositionally biased toward polar residues. 3 disulfide bridges follow: Cys-120-Cys-131, Cys-148-Cys-241, and Cys-220-Cys-233. The C-type lectin domain occupies 127–242 (YEKSCYLFSP…CSVPSCSICE (116 aa)). A (1,3-beta-D-glucosyl)n-binding site is contributed by 146–153 (RQCSQLGS). Lys-157, Asp-159, and Glu-163 together coordinate a divalent metal cation. A (1,3-beta-D-glucosyl)n-binding site is contributed by Glu-195. Glu-242 is a binding site for a divalent metal cation.

As to quaternary structure, homodimer. Interacts with SYK; participates in leukocyte activation in presence of fungal pathogens. Interacts with CD37; this interaction controls CLEC7A-mediated IL-6 production. Phosphorylated on tyrosine residues in response to beta-glucan binding. As to expression, detected in dendritic cells, in paracortical and medullary regions of lymph nodes, and in spleen red pulp and white pulp.

Its subcellular location is the cell membrane. Lectin that functions as a pattern recognizing receptor (PRR) specific for beta-1,3-linked and beta-1,6-linked glucans, which constitute cell wall constituents from pathogenic bacteria and fungi. Necessary for the TLR2-mediated inflammatory response and activation of NF-kappa-B: upon beta-glucan binding, recruits SYK via its ITAM motif and promotes a signaling cascade that activates some CARD domain-BCL10-MALT1 (CBM) signalosomes, leading to the activation of NF-kappa-B and MAP kinase p38 (MAPK11, MAPK12, MAPK13 and/or MAPK14) pathways which stimulate expression of genes encoding pro-inflammatory cytokines and chemokines. Enhances cytokine production in macrophages and dendritic cells. Mediates production of reactive oxygen species in the cell. Mediates phagocytosis of C.albicans conidia. Binds T-cells in a way that does not involve their surface glycans and plays a role in T-cell activation. Stimulates T-cell proliferation. Induces phosphorylation of SCIMP after binding beta-glucans. The polypeptide is C-type lectin domain family 7 member A (CLEC7A) (Macaca mulatta (Rhesus macaque)).